A 217-amino-acid chain; its full sequence is Non-structural protein NS3 (217 aa).

The protein belongs to the orbivirus NS3 family.

May play a role in the release of virions from infected cells. In Camelus dromedarius (Dromedary), this protein is Non-structural protein NS3 (Segment-10).